The following is a 220-amino-acid chain: RPA-interacting protein B (220 aa).

Residues 1 to 45 are interaction with importin beta; sequence MEAERRHRALYKGTTPPWKETYRKRCVERLKSNRSKLLDKFRQVG. An interaction with RPA1 region spans residues 49 to 165; the sequence is HGGVGGSFLV…QCGVYINTQS (117 aa). The RIP-type zinc finger occupies 138 to 213; that stretch reads CPVCNRNYLT…ASLFMSCQEC (76 aa).

Interacts directly with the RPA1 subunit of RPA complex. Interacts with importin beta, but not with importin alpha. Forms a complex with the RPA complex and importin beta, which is dissociated by Ran-GTP.

It localises to the nucleus. In terms of biological role, mediates the import of RPA complex into the nucleus, via its interaction with importin beta. The polypeptide is RPA-interacting protein B (rpain-b) (Xenopus laevis (African clawed frog)).